A 429-amino-acid polypeptide reads, in one-letter code: Trigger factor (429 aa).

Residues 164-249 form the PPIase FKBP-type domain; that stretch reads GDWAVIDHEG…LKALKVRQAP (86 aa).

The protein belongs to the FKBP-type PPIase family. Tig subfamily.

It is found in the cytoplasm. The enzyme catalyses [protein]-peptidylproline (omega=180) = [protein]-peptidylproline (omega=0). In terms of biological role, involved in protein export. Acts as a chaperone by maintaining the newly synthesized protein in an open conformation. Functions as a peptidyl-prolyl cis-trans isomerase. This chain is Trigger factor, found in Anaeromyxobacter dehalogenans (strain 2CP-C).